The chain runs to 937 residues: Protocadherin alpha-7 (937 aa).

Residues 1–29 form the signal peptide; the sequence is MVCPNGYDPGGRHLLLFIIILAAWEAGRG. 6 Cadherin domains span residues 30 to 133, 134 to 242, 243 to 350, 351 to 455, 456 to 565, and 581 to 678; these read QLHY…PPVF, PATQ…APVF, DRTL…APQL, TLTS…APAF, AQPE…APAL, and VPRS…APKA. The Extracellular portion of the chain corresponds to 30 to 697; that stretch reads QLHYSVPEEA…GPETELVDVN (668 aa). A disulfide bridge links C96 with C102. N-linked (GlcNAc...) asparagine glycans are attached at residues N254 and N265. N-linked (GlcNAc...) asparagine glycosylation occurs at N548. Residues 698 to 718 form a helical membrane-spanning segment; sequence VYLIIAICAVSSLLVLTLLLY. Residues 719-937 are Cytoplasmic-facing; the sequence is TALRCSAPSS…GNSTTDNSDQ (219 aa). Disordered stretches follow at residues 755–795 and 814–937; these read RQRV…DWRY and ILRA…NSDQ. PXXP repeat units lie at residues 774 to 777, 786 to 789, 819 to 822, 860 to 863, and 878 to 881; these read PSLP, PRQP, PGGP, PGNP, and PGSP. The segment at 774-881 is 5 X 4 AA repeats of P-X-X-P; that stretch reads PSLPQGPSST…PDKFIIPGSP (108 aa). A compositionally biased stretch (polar residues) spans 775–787; sequence SLPQGPSSTDNPR. Over residues 896 to 910 the composition is skewed to basic and acidic residues; the sequence is DKSDFITFGKKEETK.

Forms homodimers in trans (molecules expressed by two different cells). Forms promiscuous heterodimers in cis (at the plasma membrane of the same cell) with other protocadherins.

The protein resides in the cell membrane. Functionally, calcium-dependent cell-adhesion protein involved in cells self-recognition and non-self discrimination. Thereby, it is involved in the establishment and maintenance of specific neuronal connections in the brain. The protein is Protocadherin alpha-7 of Homo sapiens (Human).